The chain runs to 149 residues: MNKALRQKKIRELVENNDVSGQQELLGMLEKEGFSVAQPTLSRDFAEMGIVRNRTADGGYRLSVPEEPQEDILRGLVGMEVLSITANETSIIINTLPGRAHGVGSFLDRINSPEILGTIAGDDTVLVIPATIRKISSVKSYIQKILSQP.

It belongs to the ArgR family.

It localises to the cytoplasm. The protein operates within amino-acid biosynthesis; L-arginine biosynthesis [regulation]. In terms of biological role, regulates arginine biosynthesis genes. The polypeptide is Arginine repressor (Chlorobaculum parvum (strain DSM 263 / NCIMB 8327) (Chlorobium vibrioforme subsp. thiosulfatophilum)).